Here is a 255-residue protein sequence, read N- to C-terminus: Thiazole synthase (255 aa).

Lysine 97 serves as the catalytic Schiff-base intermediate with DXP. 1-deoxy-D-xylulose 5-phosphate is bound by residues glycine 158, 184-185 (AG), and 206-207 (NT).

This sequence belongs to the ThiG family. As to quaternary structure, homotetramer. Forms heterodimers with either ThiH or ThiS.

It localises to the cytoplasm. It carries out the reaction [ThiS sulfur-carrier protein]-C-terminal-Gly-aminoethanethioate + 2-iminoacetate + 1-deoxy-D-xylulose 5-phosphate = [ThiS sulfur-carrier protein]-C-terminal Gly-Gly + 2-[(2R,5Z)-2-carboxy-4-methylthiazol-5(2H)-ylidene]ethyl phosphate + 2 H2O + H(+). It participates in cofactor biosynthesis; thiamine diphosphate biosynthesis. Functionally, catalyzes the rearrangement of 1-deoxy-D-xylulose 5-phosphate (DXP) to produce the thiazole phosphate moiety of thiamine. Sulfur is provided by the thiocarboxylate moiety of the carrier protein ThiS. In vitro, sulfur can be provided by H(2)S. This Moorella thermoacetica (strain ATCC 39073 / JCM 9320) protein is Thiazole synthase.